Consider the following 367-residue polypeptide: Peroxisome biogenesis protein 16 (367 aa).

The tract at residues 135-173 (GGETPNEEKDSNQSESQNRAGNSGRNLGPHGLGNQNHHN) is disordered. Polar residues predominate over residues 147 to 159 (QSESQNRAGNSGR). 2 consecutive transmembrane segments (helical) span residues 237–257 (ALFA…VLFI) and 264–284 (SWIP…LLAN).

The protein belongs to the peroxin-16 family. As to quaternary structure, interacts with APEM9 (via both N- and C-terminus). The detection of an additional immunorelated polypeptide of 52 kDa suggests a post-translational modification of PEX16. Expressed in roots, siliques, seeds, cotyledons, leaves and flowers. Low expression in leaves and roots.

Its subcellular location is the peroxisome membrane. The protein resides in the endoplasmic reticulum membrane. In terms of biological role, involved in the formation of peroxisomes, lipid bodies and protein bodies. In Arabidopsis thaliana (Mouse-ear cress), this protein is Peroxisome biogenesis protein 16.